The following is a 124-amino-acid chain: UPF0102 protein Rcas_2007 (124 aa).

It belongs to the UPF0102 family.

This is UPF0102 protein Rcas_2007 from Roseiflexus castenholzii (strain DSM 13941 / HLO8).